The primary structure comprises 505 residues: Catalase (505 aa).

The interval 1-25 is disordered; sequence MSQQDKKLTGVFGHPVSDRENSMTA. Residues H56 and N129 contribute to the active site. A heme-binding site is contributed by Y339.

The protein belongs to the catalase family. Homodimer. Requires heme as cofactor.

It catalyses the reaction 2 H2O2 = O2 + 2 H2O. Functionally, decomposes hydrogen peroxide into water and oxygen; serves to protect cells from the toxic effects of hydrogen peroxide. The sequence is that of Catalase (katA) from Staphylococcus aureus.